The following is a 356-amino-acid chain: GTPase Obg (356 aa).

The region spanning 1–159 (MKFLDQAKVY…RWIWLRLKLI (159 aa)) is the Obg domain. The 169-residue stretch at 160–328 (ADAGLVGLPN…ALYAIAQHLG (169 aa)) folds into the OBG-type G domain. GTP-binding positions include 166–173 (GLPNAGKS), 191–195 (FTTLH), 213–216 (DIPG), 280–283 (NKID), and 309–311 (SGV). Positions 173 and 193 each coordinate Mg(2+). The segment at 333 to 356 (DIPLPKPSNADEEDPDTDQPWSPV) is disordered.

The protein belongs to the TRAFAC class OBG-HflX-like GTPase superfamily. OBG GTPase family. Monomer. Mg(2+) serves as cofactor.

Its subcellular location is the cytoplasm. In terms of biological role, an essential GTPase which binds GTP, GDP and possibly (p)ppGpp with moderate affinity, with high nucleotide exchange rates and a fairly low GTP hydrolysis rate. Plays a role in control of the cell cycle, stress response, ribosome biogenesis and in those bacteria that undergo differentiation, in morphogenesis control. This is GTPase Obg from Hyphomonas neptunium (strain ATCC 15444).